We begin with the raw amino-acid sequence, 95 residues long: Large ribosomal subunit protein bL25 (95 aa).

This sequence belongs to the bacterial ribosomal protein bL25 family. In terms of assembly, part of the 50S ribosomal subunit; part of the 5S rRNA/L5/L18/L25 subcomplex. Contacts the 5S rRNA. Binds to the 5S rRNA independently of L5 and L18.

Its function is as follows. This is one of the proteins that binds to the 5S RNA in the ribosome where it forms part of the central protuberance. This Actinobacillus succinogenes (strain ATCC 55618 / DSM 22257 / CCUG 43843 / 130Z) protein is Large ribosomal subunit protein bL25.